Reading from the N-terminus, the 145-residue chain is D-aminoacyl-tRNA deacylase (145 aa).

The Gly-cisPro motif, important for rejection of L-amino acids motif lies at 137-138; the sequence is GP.

It belongs to the DTD family. In terms of assembly, homodimer.

It localises to the cytoplasm. It carries out the reaction glycyl-tRNA(Ala) + H2O = tRNA(Ala) + glycine + H(+). The catalysed reaction is a D-aminoacyl-tRNA + H2O = a tRNA + a D-alpha-amino acid + H(+). An aminoacyl-tRNA editing enzyme that deacylates mischarged D-aminoacyl-tRNAs. Also deacylates mischarged glycyl-tRNA(Ala), protecting cells against glycine mischarging by AlaRS. Acts via tRNA-based rather than protein-based catalysis; rejects L-amino acids rather than detecting D-amino acids in the active site. By recycling D-aminoacyl-tRNA to D-amino acids and free tRNA molecules, this enzyme counteracts the toxicity associated with the formation of D-aminoacyl-tRNA entities in vivo and helps enforce protein L-homochirality. This chain is D-aminoacyl-tRNA deacylase, found in Pseudomonas putida (strain ATCC 47054 / DSM 6125 / CFBP 8728 / NCIMB 11950 / KT2440).